A 309-amino-acid polypeptide reads, in one-letter code: Ras-like protein 1 (309 aa).

Residues Gly20 to Ala25, Val36 to Thr42, Ala66 to Gly67, Asn123 to Asp126, and Ser153 to Lys155 each bind GTP. An Effector region motif is present at residues Tyr39 to Tyr47. The segment at Lys177–Gly303 is disordered. Composition is skewed to polar residues over residues Asn179–Thr188 and Asn209–Gly235. Residues Glu236–Asn245 are compositionally biased toward basic and acidic residues. The span at Tyr246–Asn256 shows a compositional bias: low complexity. Residues Thr257–Asn296 are compositionally biased toward polar residues. Cys305 is lipidated: S-palmitoyl cysteine. Residue Cys306 is modified to Cysteine methyl ester. Residue Cys306 is the site of S-farnesyl cysteine attachment. A propeptide spans Ile307–Cys309 (removed in mature form).

This sequence belongs to the small GTPase superfamily. Ras family. Post-translationally, farnesylated by RAM1-RAM2, which is required for targeting RAS1 to the cytoplasmic site of the endoplasmic reticulum, where proteolytic processing of the C-terminus by RCE1 and methylation of the resulting carboxyl group by STE14 occurs. In terms of processing, palmitoylated by the ERF2-SHR5 complex, which is required for proper plasma membrane localization of RAS1.

It localises to the cell membrane. The catalysed reaction is GTP + H2O = GDP + phosphate + H(+). Alternates between an inactive form bound to GDP and an active form bound to GTP. Activated by guanine nucleotide-exchange factor (GEF) CDC25 and inactivated by GTPase-activating proteins (GAPs) IRA1 and IRA2. Functionally, the S.cerevisiae Ras proteins modulate the activity of the adenylate cyclase catalytic subunit and therefore affect the biosynthesis of cyclic-AMP. This chain is Ras-like protein 1 (RAS1), found in Saccharomyces cerevisiae (strain ATCC 204508 / S288c) (Baker's yeast).